The sequence spans 383 residues: Pentatricopeptide repeat-containing protein 2, mitochondrial (383 aa).

The stretch at 161 to 195 is one PPR repeat; that stretch reads TSFNILMDMLFIKGKYKSALEVLIEMKNQNVKFTT. Ser377 carries the phosphoserine modification.

Belongs to the PTCD2 family.

It localises to the mitochondrion. Functionally, involved in mitochondrial RNA maturation and mitochondrial respiratory chain function. The protein is Pentatricopeptide repeat-containing protein 2, mitochondrial (PTCD2) of Pongo abelii (Sumatran orangutan).